The following is a 291-amino-acid chain: Pyridoxal 5'-phosphate synthase subunit PdxS (291 aa).

A D-ribose 5-phosphate-binding site is contributed by D23. The active-site Schiff-base intermediate with D-ribose 5-phosphate is K80. G152 is a D-ribose 5-phosphate binding site. A D-glyceraldehyde 3-phosphate-binding site is contributed by R164. D-ribose 5-phosphate-binding positions include G213 and 234-235; that span reads GS.

Belongs to the PdxS/SNZ family. In terms of assembly, in the presence of PdxT, forms a dodecamer of heterodimers.

The catalysed reaction is aldehydo-D-ribose 5-phosphate + D-glyceraldehyde 3-phosphate + L-glutamine = pyridoxal 5'-phosphate + L-glutamate + phosphate + 3 H2O + H(+). It functions in the pathway cofactor biosynthesis; pyridoxal 5'-phosphate biosynthesis. In terms of biological role, catalyzes the formation of pyridoxal 5'-phosphate from ribose 5-phosphate (RBP), glyceraldehyde 3-phosphate (G3P) and ammonia. The ammonia is provided by the PdxT subunit. Can also use ribulose 5-phosphate and dihydroxyacetone phosphate as substrates, resulting from enzyme-catalyzed isomerization of RBP and G3P, respectively. The sequence is that of Pyridoxal 5'-phosphate synthase subunit PdxS from Methanocorpusculum labreanum (strain ATCC 43576 / DSM 4855 / Z).